We begin with the raw amino-acid sequence, 159 residues long: 2-C-methyl-D-erythritol 2,4-cyclodiphosphate synthase (159 aa).

Residues Asp10 and His12 each contribute to the a divalent metal cation site. Residues 10 to 12 and 36 to 37 each bind 4-CDP-2-C-methyl-D-erythritol 2-phosphate; these read DVH and HS. His44 is an a divalent metal cation binding site. 4-CDP-2-C-methyl-D-erythritol 2-phosphate contacts are provided by residues 58-60, 63-67, 102-108, 134-137, Phe141, and Arg144; these read DIG, FPDTD, AQAPRMA, and TTSE.

Belongs to the IspF family. As to quaternary structure, homotrimer. Requires a divalent metal cation as cofactor.

The enzyme catalyses 4-CDP-2-C-methyl-D-erythritol 2-phosphate = 2-C-methyl-D-erythritol 2,4-cyclic diphosphate + CMP. It functions in the pathway isoprenoid biosynthesis; isopentenyl diphosphate biosynthesis via DXP pathway; isopentenyl diphosphate from 1-deoxy-D-xylulose 5-phosphate: step 4/6. Its function is as follows. Involved in the biosynthesis of isopentenyl diphosphate (IPP) and dimethylallyl diphosphate (DMAPP), two major building blocks of isoprenoid compounds. Catalyzes the conversion of 4-diphosphocytidyl-2-C-methyl-D-erythritol 2-phosphate (CDP-ME2P) to 2-C-methyl-D-erythritol 2,4-cyclodiphosphate (ME-CPP) with a corresponding release of cytidine 5-monophosphate (CMP). This Cellvibrio japonicus (strain Ueda107) (Pseudomonas fluorescens subsp. cellulosa) protein is 2-C-methyl-D-erythritol 2,4-cyclodiphosphate synthase.